A 257-amino-acid chain; its full sequence is MTEFVVAIPARYAASRLPGKPLRLLGGEPLVLHVARRALQAGAGEVWVATDDQRIADALSGLAEVKVAMTATSHASGTDRLAECARIAGWADDTVVVNLQGDEPFAPAAGIRAVAQALVEGNAPMSTLATAVEDAETLFDPNVVKLVRNVRNEAMYFSRAPIAWHRDGFARSREVLPEGHAWLRHIGIYGYRAGFLQQFAAMPPGRLEQVESLEQLRVLEAGYPISVAISPEPFPAGIDTPEDLERAEALLQTLAAR.

This sequence belongs to the KdsB family.

It localises to the cytoplasm. The catalysed reaction is 3-deoxy-alpha-D-manno-oct-2-ulosonate + CTP = CMP-3-deoxy-beta-D-manno-octulosonate + diphosphate. Its pathway is nucleotide-sugar biosynthesis; CMP-3-deoxy-D-manno-octulosonate biosynthesis; CMP-3-deoxy-D-manno-octulosonate from 3-deoxy-D-manno-octulosonate and CTP: step 1/1. The protein operates within bacterial outer membrane biogenesis; lipopolysaccharide biosynthesis. Functionally, activates KDO (a required 8-carbon sugar) for incorporation into bacterial lipopolysaccharide in Gram-negative bacteria. The sequence is that of 3-deoxy-manno-octulosonate cytidylyltransferase from Stenotrophomonas maltophilia (strain K279a).